A 679-amino-acid chain; its full sequence is Protein CASP (679 aa).

Residues 1 to 614 lie on the Cytoplasmic side of the membrane; it reads MDTSVYSHAL…VILQNKMTRM (614 aa). Coiled coils occupy residues 14-90 and 178-341; these read AKAD…EKVL and RNWK…NYSD. Ser364 carries the post-translational modification Phosphoserine. Residues 385–444 are a coiled coil; the sequence is ANKKLQATLAEYRSKSTAQEEERNELKKSVDQLKQQIATLKEANEKLETDLEKVENVSPH. Phosphoserine is present on residues Ser450 and Ser453. The stretch at 492–540 forms a coiled coil; the sequence is IVTKQRDRFRSRNMDLEKQLRQGNSEKGKLKLEISKLKGDNTKLYERIR. The residue at position 555 (Ser555) is a Phosphoserine. The helical; Anchor for type IV membrane protein transmembrane segment at 615–635 threads the bilayer; it reads VFLFYCIGLHGLVFMMSMYVI. The Lumenal segment spans residues 636 to 679; sequence NISGYMTPEVGIVQSAKSSSNLNGGLGGAEKVAAGVGSVHGINR.

It belongs to the CASP family.

It localises to the golgi apparatus membrane. Functionally, may be involved in intra-Golgi transport. The chain is Protein CASP (COY1) from Saccharomyces cerevisiae (strain ATCC 204508 / S288c) (Baker's yeast).